We begin with the raw amino-acid sequence, 425 residues long: Phosphoribosylamine--glycine ligase (425 aa).

The region spanning 109-315 is the ATP-grasp domain; sequence KALMQEAGIP…LEELILACVQ (207 aa). 135–195 serves as a coordination point for ATP; it reads IQAQGAPIVV…EECLTGQEVS (61 aa). The Mg(2+) site is built by glutamate 285 and asparagine 287.

It belongs to the GARS family. Mg(2+) is required as a cofactor. Mn(2+) serves as cofactor.

It carries out the reaction 5-phospho-beta-D-ribosylamine + glycine + ATP = N(1)-(5-phospho-beta-D-ribosyl)glycinamide + ADP + phosphate + H(+). The protein operates within purine metabolism; IMP biosynthesis via de novo pathway; N(1)-(5-phospho-D-ribosyl)glycinamide from 5-phospho-alpha-D-ribose 1-diphosphate: step 2/2. This is Phosphoribosylamine--glycine ligase from Nostoc sp. (strain PCC 7120 / SAG 25.82 / UTEX 2576).